We begin with the raw amino-acid sequence, 379 residues long: Chaperone protein DnaJ (379 aa).

The J domain occupies 5–70 (DYYEVLGVGK…EKKAAYDQYG (66 aa)). A CR-type zinc finger spans residues 139–217 (GHEAQIRVPH…CHGQGKLKSQ (79 aa)). The Zn(2+) site is built by Cys-152, Cys-155, Cys-169, Cys-172, Cys-191, Cys-194, Cys-205, and Cys-208. CXXCXGXG motif repeat units follow at residues 152–159 (CEHCHGNG), 169–176 (CPTCNGVG), 191–198 (CPKCHGSG), and 205–212 (CTKCHGQG).

It belongs to the DnaJ family. In terms of assembly, homodimer. Zn(2+) serves as cofactor.

Its subcellular location is the cytoplasm. In terms of biological role, participates actively in the response to hyperosmotic and heat shock by preventing the aggregation of stress-denatured proteins and by disaggregating proteins, also in an autonomous, DnaK-independent fashion. Unfolded proteins bind initially to DnaJ; upon interaction with the DnaJ-bound protein, DnaK hydrolyzes its bound ATP, resulting in the formation of a stable complex. GrpE releases ADP from DnaK; ATP binding to DnaK triggers the release of the substrate protein, thus completing the reaction cycle. Several rounds of ATP-dependent interactions between DnaJ, DnaK and GrpE are required for fully efficient folding. Also involved, together with DnaK and GrpE, in the DNA replication of plasmids through activation of initiation proteins. In Cupriavidus metallidurans (strain ATCC 43123 / DSM 2839 / NBRC 102507 / CH34) (Ralstonia metallidurans), this protein is Chaperone protein DnaJ.